Consider the following 228-residue polypeptide: PKHD-type hydroxylase Vapar_1809 (228 aa).

The Fe2OG dioxygenase domain maps to Gln-78–Ser-179. Fe cation is bound by residues His-97, Asp-99, and His-160. Arg-170 contributes to the 2-oxoglutarate binding site.

Requires Fe(2+) as cofactor. The cofactor is L-ascorbate.

This chain is PKHD-type hydroxylase Vapar_1809, found in Variovorax paradoxus (strain S110).